The chain runs to 361 residues: Collagenase (361 aa).

The protein belongs to the peptidase U32 family. Homodimer. The cofactor is a metal cation.

With respect to regulation, activity somewhat enhanced by calcium ions, inhibited by zinc and Fe(3+) ions and by p-chloromercuribenzoic acid and EDTA. Activity is enhanced by salivary peptide cystatin and reduced by salivary peptide histatin. Its function is as follows. Has collagenase activity. Active on soluble collagen, reconstituted type I collagen, heat denatured type I collagen and azocoll, but not gelatin or the synthetic bacterial collagenase substrate PZ-PLGPA. May play a role in virulence. In Porphyromonas gingivalis (Bacteroides gingivalis), this protein is Collagenase.